Consider the following 701-residue polypeptide: Protein mono-ADP-ribosyltransferase PARP12 (701 aa).

3 C3H1-type zinc fingers span residues 94-119 (LCRF…HSLT), 150-179 (WLLP…IKLH), and 180-202 (ICQY…HDFS). Residues 234-268 (KNKSSAPSRVPPLFVPQGTSERKDSSGSVSPNTLS) are disordered. Serine 258 bears the Phosphoserine mark. The segment covering 259-268 (SGSVSPNTLS) has biased composition (polar residues). 2 consecutive C3H1-type zinc fingers follow at residues 270–297 (EEGD…HFHL) and 271–296 (EGDQ…VHFH). 2 WWE domains span residues 298–361 (PYRW…RLST) and 364–458 (SVTK…KVCR). At cysteine 474 the chain carries ADP-ribosylcysteine. The 215-residue stretch at 484–698 (IPDYWDSSAL…ILLALGSLFS (215 aa)) folds into the PARP catalytic domain. An ADP-ribosyl aspartic acid mark is found at aspartate 600 and aspartate 611.

It belongs to the ARTD/PARP family. Interacts with PARP11; this interaction plays a key role in zika virus suppression. Interacts with ISG15. Auto-mono-ADP-ribosylated. Post-translationally, phosphorylated by PRKD1.

Its subcellular location is the nucleus. The protein resides in the golgi apparatus. It localises to the trans-Golgi network. The protein localises to the cytoplasm. It is found in the stress granule. It catalyses the reaction L-aspartyl-[protein] + NAD(+) = 4-O-(ADP-D-ribosyl)-L-aspartyl-[protein] + nicotinamide. The enzyme catalyses L-cysteinyl-[protein] + NAD(+) = S-(ADP-D-ribosyl)-L-cysteinyl-[protein] + nicotinamide + H(+). Functionally, mono-ADP-ribosyltransferase that mediates mono-ADP-ribosylation of target proteins. Acts as an antiviral factor by cooperating with PARP11 to suppress Zika virus replication. Displays anti-alphavirus activity during IFN-gamma immune activation by directly ADP-ribosylating the alphaviral non-structural proteins nsP3 and nsP4. Acts as a component of the PRKD1-driven regulatory cascade that selectively controls a major branch of the basolateral transport pathway by catalyzing the MARylation of GOLGA1. Acts also as a key regulator of mitochondrial function, protein translation, and inflammation. Inhibits PINK1/Parkin-dependent mitophagy and promotes cartilage degeneration by inhibiting the ubiquitination and SUMOylation of MFN1/2 by upregulating ISG15 and ISGylation. This is Protein mono-ADP-ribosyltransferase PARP12 from Homo sapiens (Human).